Here is a 634-residue protein sequence, read N- to C-terminus: 1-deoxy-D-xylulose-5-phosphate synthase (634 aa).

Residues H74 and 115-117 contribute to the thiamine diphosphate site; that span reads AHS. D146 lines the Mg(2+) pocket. Thiamine diphosphate-binding positions include 147 to 148, N176, Y283, and E365; that span reads GA. Residue N176 participates in Mg(2+) binding.

It belongs to the transketolase family. DXPS subfamily. In terms of assembly, homodimer. It depends on Mg(2+) as a cofactor. Requires thiamine diphosphate as cofactor.

The enzyme catalyses D-glyceraldehyde 3-phosphate + pyruvate + H(+) = 1-deoxy-D-xylulose 5-phosphate + CO2. It participates in metabolic intermediate biosynthesis; 1-deoxy-D-xylulose 5-phosphate biosynthesis; 1-deoxy-D-xylulose 5-phosphate from D-glyceraldehyde 3-phosphate and pyruvate: step 1/1. Functionally, catalyzes the acyloin condensation reaction between C atoms 2 and 3 of pyruvate and glyceraldehyde 3-phosphate to yield 1-deoxy-D-xylulose-5-phosphate (DXP). This Burkholderia lata (strain ATCC 17760 / DSM 23089 / LMG 22485 / NCIMB 9086 / R18194 / 383) protein is 1-deoxy-D-xylulose-5-phosphate synthase.